We begin with the raw amino-acid sequence, 236 residues long: Glucosamine-6-phosphate deaminase (236 aa).

Aspartate 62 serves as the catalytic Proton acceptor; for enolization step. Asparagine 128 serves as the catalytic For ring-opening step. Catalysis depends on histidine 130, which acts as the Proton acceptor; for ring-opening step. Glutamate 135 functions as the For ring-opening step in the catalytic mechanism.

It belongs to the glucosamine/galactosamine-6-phosphate isomerase family. NagB subfamily.

The catalysed reaction is alpha-D-glucosamine 6-phosphate + H2O = beta-D-fructose 6-phosphate + NH4(+). The protein operates within amino-sugar metabolism; N-acetylneuraminate degradation; D-fructose 6-phosphate from N-acetylneuraminate: step 5/5. In terms of biological role, catalyzes the reversible isomerization-deamination of glucosamine 6-phosphate (GlcN6P) to form fructose 6-phosphate (Fru6P) and ammonium ion. The protein is Glucosamine-6-phosphate deaminase of Pediococcus pentosaceus (strain ATCC 25745 / CCUG 21536 / LMG 10740 / 183-1w).